The following is a 137-amino-acid chain: Basic phospholipase A2 homolog Bsc-K49 (137 aa).

The signal sequence occupies residues 1 to 16 (MRTLWIVAVLLVGVEG). 7 cysteine pairs are disulfide-bonded: Cys-42-Cys-131, Cys-44-Cys-60, Cys-59-Cys-111, Cys-65-Cys-137, Cys-66-Cys-104, Cys-73-Cys-97, and Cys-91-Cys-102. Residues 121–133 (KNYKITMKMFCKK) are important for membrane-damaging activities in eukaryotes and bacteria; heparin-binding.

This sequence belongs to the phospholipase A2 family. Group II subfamily. K49 sub-subfamily. In terms of assembly, homodimer; non-covalently linked. In terms of tissue distribution, expressed by the venom gland.

The protein localises to the secreted. Its function is as follows. Snake venom phospholipase A2 that lacks enzymatic activity. Is myotoxic, and displays edema-inducing activities. A model of myotoxic mechanism has been proposed: an apo Lys49-PLA2 is activated by the entrance of a hydrophobic molecule (e.g. fatty acid) at the hydrophobic channel of the protein leading to a reorientation of a monomer. This reorientation causes a transition between 'inactive' to 'active' states, causing alignment of C-terminal and membrane-docking sites (MDoS) side-by-side and putting the membrane-disruption sites (MDiS) in the same plane, exposed to solvent and in a symmetric position for both monomers. The MDoS region stabilizes the toxin on membrane by the interaction of charged residues with phospholipid head groups. Subsequently, the MDiS region destabilizes the membrane with penetration of hydrophobic residues. This insertion causes a disorganization of the membrane, allowing an uncontrolled influx of ions (i.e. calcium and sodium), and eventually triggering irreversible intracellular alterations and cell death. The polypeptide is Basic phospholipase A2 homolog Bsc-K49 (Bothriechis schlegelii (Eyelash palm pitviper)).